Consider the following 187-residue polypeptide: Protein GrpE (187 aa).

The segment at 1 to 23 (MADEQNLDAQAQDQAAEAGAGEE) is disordered. The span at 7-23 (LDAQAQDQAAEAGAGEE) shows a compositional bias: low complexity.

It belongs to the GrpE family. As to quaternary structure, homodimer.

It localises to the cytoplasm. In terms of biological role, participates actively in the response to hyperosmotic and heat shock by preventing the aggregation of stress-denatured proteins, in association with DnaK and GrpE. It is the nucleotide exchange factor for DnaK and may function as a thermosensor. Unfolded proteins bind initially to DnaJ; upon interaction with the DnaJ-bound protein, DnaK hydrolyzes its bound ATP, resulting in the formation of a stable complex. GrpE releases ADP from DnaK; ATP binding to DnaK triggers the release of the substrate protein, thus completing the reaction cycle. Several rounds of ATP-dependent interactions between DnaJ, DnaK and GrpE are required for fully efficient folding. This chain is Protein GrpE, found in Pseudomonas savastanoi pv. phaseolicola (strain 1448A / Race 6) (Pseudomonas syringae pv. phaseolicola (strain 1448A / Race 6)).